A 629-amino-acid chain; its full sequence is Transmembrane 9 superfamily protein C1105.08 (629 aa).

An N-terminal signal peptide occupies residues 1-26 (MLLPSIPSCSFSFVVFVSVLLQTCFS). Over 27–266 (FQLTPLSPKN…MHIESRQIRW (240 aa)) the chain is Lumenal. Residue asparagine 157 is glycosylated (N-linked (GlcNAc...) asparagine). The chain crosses the membrane as a helical span at residues 267–287 (IFIIHSAIIDTFLIFVVSIIL). Topologically, residues 288–337 (YRTLNRDINKYNSAFVDQEDVQEDFGWKLVHGDVFRPPRRPMLFSILLGT) are cytoplasmic. The helical transmembrane segment at 338 to 358 (GAQLLFMSSGIVLFAIFGIVA) threads the bilayer. Residues 359 to 364 (PSRRGS) are Lumenal-facing. Residues 365–385 (LATATVALFIISGFVSGYVSA) traverse the membrane as a helical segment. Over 386–401 (LSYKLMQGMLRKRNLL) the chain is Cytoplasmic. A helical membrane pass occupies residues 402 to 422 (LTPFVVPGFMLAAALFFNMVF). Residues 423–436 (WSKSSSSTVPFSSW) are Lumenal-facing. The chain crosses the membrane as a helical span at residues 437-457 (LLLIFLYLLFTVPLSFVGSLI). The Cytoplasmic segment spans residues 458-488 (GFRSREFVPPVRTNQIPRQIPSHSIWLSSFP). A helical membrane pass occupies residues 489 to 509 (SAIIGGSIPFLVILIELFSIL). Topologically, residues 510–519 (DSLWFHPLYF) are lumenal. Residues 520–544 (MFGFSFFCFGILVTTCIMVSIITVY) traverse the membrane as a helical segment. The Cytoplasmic segment spans residues 545 to 558 (FQLCSENYNWWWRS). The helical transmembrane segment at 559 to 579 (FITPGFCGIYVFIFSVFYWFF) threads the bilayer. The Lumenal segment spans residues 580–598 (KISSSSLATAVLYFGYSLL). A helical transmembrane segment spans residues 599–619 (ISVLVFFLCGSVGFFGAFLFV). Residues 620-629 (NKIYASIKID) are Cytoplasmic-facing.

Belongs to the nonaspanin (TM9SF) (TC 9.A.2) family.

The protein localises to the golgi apparatus membrane. The protein resides in the vacuole membrane. The protein is Transmembrane 9 superfamily protein C1105.08 of Schizosaccharomyces pombe (strain 972 / ATCC 24843) (Fission yeast).